The following is a 161-amino-acid chain: Regulatory protein RecX (161 aa).

This sequence belongs to the RecX family.

The protein localises to the cytoplasm. In terms of biological role, modulates RecA activity. This is Regulatory protein RecX from Thermotoga petrophila (strain ATCC BAA-488 / DSM 13995 / JCM 10881 / RKU-1).